Reading from the N-terminus, the 343-residue chain is MLVVQMPFSFPMAHFILFVFTVSTIFHVQQRLAKIQAMWELPVQIPVLASTSKALGPSQLRGMWTINAIGRLGNQMGEYATLYALAKMNGRPAFIPAQMHSTLAPIFRITLPVLHSATASRIPWQNYHLNDWMEEEYRHIPGEYVRFTGYPCSWTFYHHLRQEILQEFTLHDHVREEAQKFLRGLQVNGSQPGTFVGVHVRRGDYVHVMPKVWKGVVADRRYLQQALDWFRARYSSPIFVVTSNGMAWCRENIDTSHGDVVFAGDGIEGSPAKDFALLTQCNHTIMTIGTFGIWAAYLTGGDTIYLANYTLPDSPFLKIFKPEAAFLPEWTGIAADLSPLLKH.

At methionine 1–histidine 14 the chain is on the cytoplasmic side. The chain crosses the membrane as a helical; Signal-anchor for type II membrane protein span at residues phenylalanine 15–valine 28. At glutamine 29–histidine 343 the chain is on the lumenal side. 3 N-linked (GlcNAc...) asparagine glycosylation sites follow: asparagine 188, asparagine 282, and asparagine 308.

This sequence belongs to the glycosyltransferase 11 family.

The protein localises to the golgi apparatus. It is found in the golgi stack membrane. It carries out the reaction a beta-D-galactosyl-(1-&gt;3)-N-acetyl-beta-D-glucosaminyl derivative + GDP-beta-L-fucose = an alpha-L-Fuc-(1-&gt;2)-beta-D-Gal-(1-&gt;3)-beta-D-GlcNAc derivative + GDP + H(+). It catalyses the reaction a beta-D-galactosyl-(1-&gt;4)-N-acetyl-beta-D-glucosaminyl derivative + GDP-beta-L-fucose = an alpha-L-Fuc-(1-&gt;2)-beta-D-Gal-(1-&gt;4)-beta-D-GlcNAc derivative + GDP + H(+). The enzyme catalyses a neolactoside nLc4Cer + GDP-beta-L-fucose = a neolactoside IV(2)-alpha-Fuc-nLc4Cer + GDP + H(+). The catalysed reaction is a neolactoside nLc4Cer(d18:1(4E)) + GDP-beta-L-fucose = a neolactoside IV(2)-alpha-Fuc-nLc4Cer(d18:1(4E)) + GDP + H(+). It carries out the reaction a ganglioside GM1 + GDP-beta-L-fucose = a ganglioside Fuc-GM1 + GDP + H(+). It catalyses the reaction a ganglioside GA1 + GDP-beta-L-fucose = a ganglioside Fuc-GA1 + GDP + H(+). The enzyme catalyses Lc4Cer + GDP-beta-L-fucose = alpha-L-fucosyl-(1-&gt;2)-beta-D-galactosyl-(1-&gt;3)-N-acetyl-beta-D-glucosaminyl-(1-&gt;3)-beta-D-galactosyl-(1-&gt;4)-beta-D-glucosyl-(1&lt;-&gt;1')-ceramide + GDP + H(+). The catalysed reaction is a beta-D-Gal-(1-&gt;3)-beta-D-GlcNAc-(1-&gt;3)-beta-D-Gal-(1-&gt;4)-beta-D-Glc-(1&lt;-&gt;1')-Cer(d18:1(4E)) + GDP-beta-L-fucose = alpha-L-fucosyl-(1-&gt;2)- beta-D-galactosyl-(1-&gt;3)-N-acetyl-beta-D-glucosaminyl-(1-&gt;3)-beta-D-galactosyl-(1-&gt;4)-beta-D-glucosyl-(1&lt;-&gt;1')-N-acylsphing-4-enine + GDP + H(+). It carries out the reaction a ganglioside GD1b + GDP-beta-L-fucose = a ganglioside Fuc-GD1b + GDP + H(+). It catalyses the reaction a ganglioside GM1 (d18:1(4E)) + GDP-beta-L-fucose = a ganglioside Fuc-GM1 (d18:1(4E)) + GDP + H(+). The enzyme catalyses a globoside GalGb4Cer (d18:1(4E)) + GDP-beta-L-fucose = a globoside Globo-H (d18:1(4E)) + GDP + H(+). The catalysed reaction is a lactoside III(4)-a-Fuc-Lc4Cer + GDP-beta-L-fucose = a lactoside IV(2),III(4)-a-[Fuc]2-Lc4Cer + GDP + H(+). It carries out the reaction beta-D-galactosyl-(1-&gt;3)-N-acetyl-D-galactosamine + GDP-beta-L-fucose = alpha-L-fucosyl-(1-&gt;2)-beta-D-galactosyl-(1-&gt;3)-N-acetyl-D-galactosamine + GDP + H(+). It participates in protein modification; protein glycosylation. Functionally, catalyzes the transfer of L-fucose, from a guanosine diphosphate-beta-L-fucose, to the terminal galactose on both O- and N-linked glycans chains of cell surface glycoproteins and glycolipids and the resulting epitope regulates several processes such as cell-cell interaction including host-microbe interaction, cell surface expression and cell proliferation. Preferentially fucosylates gangliosides GA1 and GM1 in the antrum, cecum and colon and in the female reproductive organs. Fucosylated host glycoproteins or glycolipids mediate interaction with intestinal microbiota influencing its composition. Creates a soluble precursor oligosaccharide FuC-alpha ((1,2)Galbeta-) called the H antigen which is an essential substrate for the final step in the soluble ABO blood group antigen synthesis pathway. The chain is Galactoside alpha-(1,2)-fucosyltransferase 2 from Gorilla gorilla gorilla (Western lowland gorilla).